Here is a 105-residue protein sequence, read N- to C-terminus: Ketoisovalerate oxidoreductase subunit VorD (105 aa).

2 consecutive 4Fe-4S ferredoxin-type domains span residues 44 to 73 (FMPV…IKED) and 74 to 103 (GFVA…MVRE). Residues Cys53, Cys56, Cys59, Cys63, Cys83, Cys86, Cys89, and Cys93 each coordinate [4Fe-4S] cluster.

In terms of assembly, heterotetramer of one alpha, one beta, one delta and one gamma chain. Requires [4Fe-4S] cluster as cofactor.

It catalyses the reaction 3-methyl-2-oxobutanoate + 2 oxidized [2Fe-2S]-[ferredoxin] + CoA = 2-methylpropanoyl-CoA + 2 reduced [2Fe-2S]-[ferredoxin] + CO2 + H(+). This chain is Ketoisovalerate oxidoreductase subunit VorD (vorD), found in Pyrococcus horikoshii (strain ATCC 700860 / DSM 12428 / JCM 9974 / NBRC 100139 / OT-3).